A 426-amino-acid chain; its full sequence is Peptidoglycan DD-endopeptidase ShyB (426 aa).

An N-terminal signal peptide occupies residues 1–21 (MGQFRFLALIVAVLCFSVALF). Residues 32–48 (SYSVPLNQSVNTSQPPS) show a composition bias toward polar residues. Residues 32-55 (SYSVPLNQSVNTSQPPSSEMVPSD) form a disordered region. Zn(2+) contacts are provided by His291, Asp295, and His372.

Belongs to the peptidase M23B family. Monomer. Zn(2+) is required as a cofactor.

The protein localises to the periplasm. It functions in the pathway cell wall degradation; peptidoglycan degradation. Its activity is regulated as follows. Not inhibited by metal chelator EDTA. Cell wall peptidoglycan (PG) DD-endopeptidase, which may act as a substitute for other zinc-dependent PG endopeptidases (ShyA and ShyC) during zinc starvation. Hydrolyzes peptide cross-links which covalently connect adjacent PG strands probably to allow insertion of new glycans and thus cell wall expansion. Degrades purified whole PG sacculi in vitro. It is unclear how it is able to function in low zinc environments, but that may possibly be due to binding zinc with very high affinity, utilizing an alternative metal cofactor or that it may function independently of a bound metal cofactor. The protein is Peptidoglycan DD-endopeptidase ShyB of Vibrio cholerae serotype O1 (strain ATCC 39315 / El Tor Inaba N16961).